Reading from the N-terminus, the 184-residue chain is Elongation factor P (184 aa).

Belongs to the elongation factor P family.

It localises to the cytoplasm. It participates in protein biosynthesis; polypeptide chain elongation. Functionally, involved in peptide bond synthesis. Stimulates efficient translation and peptide-bond synthesis on native or reconstituted 70S ribosomes in vitro. Probably functions indirectly by altering the affinity of the ribosome for aminoacyl-tRNA, thus increasing their reactivity as acceptors for peptidyl transferase. This is Elongation factor P from Mycoplasma mycoides subsp. mycoides SC (strain CCUG 32753 / NCTC 10114 / PG1).